The sequence spans 265 residues: 3-methyl-2-oxobutanoate hydroxymethyltransferase (265 aa).

Aspartate 45 and aspartate 84 together coordinate Mg(2+). Residues 45–46, aspartate 84, and lysine 112 contribute to the 3-methyl-2-oxobutanoate site; that span reads DS. Position 114 (glutamate 114) interacts with Mg(2+). Glutamate 181 functions as the Proton acceptor in the catalytic mechanism.

It belongs to the PanB family. In terms of assembly, homodecamer; pentamer of dimers. The cofactor is Mg(2+).

The protein localises to the cytoplasm. The enzyme catalyses 3-methyl-2-oxobutanoate + (6R)-5,10-methylene-5,6,7,8-tetrahydrofolate + H2O = 2-dehydropantoate + (6S)-5,6,7,8-tetrahydrofolate. It functions in the pathway cofactor biosynthesis; (R)-pantothenate biosynthesis; (R)-pantoate from 3-methyl-2-oxobutanoate: step 1/2. Its function is as follows. Catalyzes the reversible reaction in which hydroxymethyl group from 5,10-methylenetetrahydrofolate is transferred onto alpha-ketoisovalerate to form ketopantoate. This chain is 3-methyl-2-oxobutanoate hydroxymethyltransferase, found in Wigglesworthia glossinidia brevipalpis.